The following is a 583-amino-acid chain: MMSRLNSVVIKLWLTIILIVTTVLILLSIALITFMQYYFTQETENAIREDARRISSLVEQSHNKEEAIKYSQTLIENPGGLMIINNKHRQSTASLSNIKKQMLNEVVNNDHFDDVFDKGKSVTRNVTIKEKGSSQTYILLGYPTKAQKNSHSKYSGVFIYKDLKSIEDTNNAITIITIITAVIFLTITTVFAFFLSSRITKPLRRLRDQATRVSEGDYSYKPSVTTKDEIGQLSQAFNQMSTEIEEHVDALSTSKNIRDSLINSMVEGVLGINESRQIILSNKMANDIMDNIDEDAKAFLLRQIEDTFKSKQTEMRDLEMNARFFVVTTSYIDKIEQGGKSGVVVTVRDMTNEHNLDQMKKDFIANVSHELRTPISLLQGYTESIVDGIVTEPDEIKESLAIVLDESKRLNRLVNELLNVARMDAEGLSVNKEVQPIAALLDKMKIKYRQQADDLGLNMTFNYCKKRVWSYDMDRMDQVLTNLIDNASRYTKPGDEIAITCDENESEDILYIKDTGTGIAPEHLQQVFDRFYKVDAARTRGKQGTGLGLFICKMIIEEHGGSIDVKSELGKGTTFIIKLPKPE.

Residues Met1–Lys11 lie on the Cytoplasmic side of the membrane. Residues Leu12–Ile32 traverse the membrane as a helical segment. Topologically, residues Thr33–Thr174 are extracellular. The helical transmembrane segment at Ile175–Leu195 threads the bilayer. Over Ser196–Glu583 the chain is Cytoplasmic. An HAMP domain is found at Ser197–Asp249. The region spanning Asn366–Glu583 is the Histidine kinase domain. His369 bears the Phosphohistidine; by autocatalysis mark.

Its subcellular location is the cell membrane. It catalyses the reaction ATP + protein L-histidine = ADP + protein N-phospho-L-histidine.. Its function is as follows. Member of the two-component regulatory system SrrA/SrrB, which is involved in the global regulation of staphylococcal virulence factors in response to environmental oxygen levels as well as biofilm formation. Also plays an essential role in host-derived nitric oxide resistance by regulating hmp/flavohemoglobin, an enzyme that detoxifies nitric oxide by converting it to nitrate. Functions as a sensor protein kinase which is autophosphorylated at a histidine residue and transfers its phosphate group to SrrA. In turn, SrrA binds to the upstream promoter regions of the target genes to positively and negatively regulate their expression. The polypeptide is Sensor protein SrrB (srrB) (Staphylococcus aureus (strain MW2)).